Consider the following 218-residue polypeptide: Thiamine-phosphate synthase (218 aa).

4-amino-2-methyl-5-(diphosphooxymethyl)pyrimidine contacts are provided by residues 43-47 and asparagine 75; that span reads QLRDK. 2 residues coordinate Mg(2+): aspartate 76 and aspartate 95. Residue serine 114 participates in 4-amino-2-methyl-5-(diphosphooxymethyl)pyrimidine binding. 141-143 provides a ligand contact to 2-[(2R,5Z)-2-carboxy-4-methylthiazol-5(2H)-ylidene]ethyl phosphate; it reads TPT. Lysine 144 is a 4-amino-2-methyl-5-(diphosphooxymethyl)pyrimidine binding site. Glycine 172 is a 2-[(2R,5Z)-2-carboxy-4-methylthiazol-5(2H)-ylidene]ethyl phosphate binding site.

This sequence belongs to the thiamine-phosphate synthase family. Mg(2+) serves as cofactor.

The catalysed reaction is 2-[(2R,5Z)-2-carboxy-4-methylthiazol-5(2H)-ylidene]ethyl phosphate + 4-amino-2-methyl-5-(diphosphooxymethyl)pyrimidine + 2 H(+) = thiamine phosphate + CO2 + diphosphate. It carries out the reaction 2-(2-carboxy-4-methylthiazol-5-yl)ethyl phosphate + 4-amino-2-methyl-5-(diphosphooxymethyl)pyrimidine + 2 H(+) = thiamine phosphate + CO2 + diphosphate. It catalyses the reaction 4-methyl-5-(2-phosphooxyethyl)-thiazole + 4-amino-2-methyl-5-(diphosphooxymethyl)pyrimidine + H(+) = thiamine phosphate + diphosphate. It functions in the pathway cofactor biosynthesis; thiamine diphosphate biosynthesis; thiamine phosphate from 4-amino-2-methyl-5-diphosphomethylpyrimidine and 4-methyl-5-(2-phosphoethyl)-thiazole: step 1/1. Its function is as follows. Condenses 4-methyl-5-(beta-hydroxyethyl)thiazole monophosphate (THZ-P) and 2-methyl-4-amino-5-hydroxymethyl pyrimidine pyrophosphate (HMP-PP) to form thiamine monophosphate (TMP). This Thermobifida fusca (strain YX) protein is Thiamine-phosphate synthase.